The following is a 312-amino-acid chain: Serine/threonine-protein phosphatase PP1 isozyme 2 (312 aa).

N-acetylalanine is present on A2. 4 residues coordinate Mn(2+): D70, H72, D98, and N130. H131 (proton donor) is an active-site residue. The Mn(2+) site is built by H179 and H254.

It belongs to the PPP phosphatase family. PP-1 subfamily. Interacts with SRK2D/SNRK2.2 and SRK2E/SNRK2.6. Mn(2+) serves as cofactor.

Its subcellular location is the nucleus. It is found in the cytoplasm. It catalyses the reaction O-phospho-L-seryl-[protein] + H2O = L-seryl-[protein] + phosphate. The enzyme catalyses O-phospho-L-threonyl-[protein] + H2O = L-threonyl-[protein] + phosphate. Its activity is regulated as follows. Phosphatase activity is strongly reduced by the protein phosphatase inhibitor 2 (I-2). Its function is as follows. Serine/threonine-protein phosphatase that possesses phosphatase activity toward para-nitrophenyl phosphate (pNPP) in vitro. The protein is Serine/threonine-protein phosphatase PP1 isozyme 2 of Arabidopsis thaliana (Mouse-ear cress).